The primary structure comprises 427 residues: Glutamate-1-semialdehyde 2,1-aminomutase (427 aa).

The residue at position 267 (Lys267) is an N6-(pyridoxal phosphate)lysine.

The protein belongs to the class-III pyridoxal-phosphate-dependent aminotransferase family. HemL subfamily. In terms of assembly, homodimer. Requires pyridoxal 5'-phosphate as cofactor.

The protein localises to the cytoplasm. It carries out the reaction (S)-4-amino-5-oxopentanoate = 5-aminolevulinate. It functions in the pathway porphyrin-containing compound metabolism; protoporphyrin-IX biosynthesis; 5-aminolevulinate from L-glutamyl-tRNA(Glu): step 2/2. This is Glutamate-1-semialdehyde 2,1-aminomutase from Syntrophotalea carbinolica (strain DSM 2380 / NBRC 103641 / GraBd1) (Pelobacter carbinolicus).